Consider the following 1087-residue polypeptide: Platelet-derived growth factor receptor alpha (1087 aa).

A signal peptide spans 1 to 24; the sequence is MMPAMRASLILGCLLIIGPWAILA. Residues 25-530 lie on the Extracellular side of the membrane; the sequence is ENPLPTIFPD…PTLRSELTVA (506 aa). Ig-like C2-type domains lie at 27–114 and 118–211; these read PLPT…SEIE and IYIY…LQTW. A disulfide bridge connects residues cysteine 50 and cysteine 101. Asparagine 77 and asparagine 104 each carry an N-linked (GlcNAc...) asparagine glycan. The cysteines at positions 151 and 192 are disulfide-linked. N-linked (GlcNAc...) asparagine glycosylation is found at asparagine 216, asparagine 282, asparagine 309, asparagine 356, asparagine 362, asparagine 461, and asparagine 471. Ig-like C2-type domains are found at residues 217–309, 315–409, and 417–519; these read ISVE…KKTN, KGFI…KSYS, and PALI…LKLV. Cysteine 238 and cysteine 293 are oxidised to a cystine. Cysteine 438 and cysteine 503 form a disulfide bridge. The helical transmembrane segment at 531–551 threads the bilayer; sequence AAVLVLLVIVIISLIVLVIIW. Residues 552-1087 are Cytoplasmic-facing; it reads KQKPRYEIRW…SSDLVEDSFL (536 aa). Phosphotyrosine; by autocatalysis occurs at positions 574 and 576. Positions 595–970 constitute a Protein kinase domain; that stretch reads LVLGRILGSG…CYETVLHDFL (376 aa). ATP-binding positions include 601 to 609 and lysine 629; that span reads LGSGAFGKV. A phosphotyrosine; by autocatalysis mark is found at tyrosine 722, tyrosine 733, tyrosine 744, tyrosine 756, and tyrosine 764. Catalysis depends on aspartate 818, which acts as the Proton acceptor. Tyrosine 849, tyrosine 988, and tyrosine 1017 each carry phosphotyrosine; by autocatalysis. Residues 1017 to 1064 form a disordered region; it reads YIIPLPDIDPVSEDESGKRNRHSSQTSEESAIETGSSSSTFIKRDDET. Residues 1039 to 1057 show a composition bias toward polar residues; the sequence is SSQTSEESAIETGSSSSTF.

The protein belongs to the protein kinase superfamily. Tyr protein kinase family. CSF-1/PDGF receptor subfamily. Interacts with homodimeric pdgfa, pdgfb and pdgfc, and with heterodimers formed by pdgfa and pdgfb. Monomer in the absence of bound ligand. Interaction with dimeric pdgfa, pdgfb and/or pdgfc leads to receptor dimerization, where both pdgfra homodimers and heterodimers with pdgfrb are observed. Post-translationally, ubiquitinated, leading to its internalization and degradation. In terms of processing, autophosphorylated on tyrosine residues upon ligand binding. Autophosphorylation occurs in trans, i.e. one subunit of the dimeric receptor phosphorylates tyrosine residues on the other subunit.

The protein localises to the cell membrane. The protein resides in the cell projection. It is found in the cilium. Its subcellular location is the golgi apparatus. It carries out the reaction L-tyrosyl-[protein] + ATP = O-phospho-L-tyrosyl-[protein] + ADP + H(+). Its activity is regulated as follows. Present in an inactive conformation in the absence of bound ligand. Binding of pdgfa and/or pdgfb leads to dimerization and activation by autophosphorylation on tyrosine residues. Tyrosine-protein kinase that acts as a cell-surface receptor for pdgfa, pdgfb and pdgfc and plays an essential role in the regulation of embryonic development, cell proliferation, survival and chemotaxis. Depending on the context, promotes or inhibits cell proliferation and cell migration. Plays an important role in the differentiation of bone marrow-derived mesenchymal stem cells. Required for normal skeleton development. Required for normal development of the gastrointestinal tract. Plays a role in cell migration and chemotaxis in wound healing. Plays a role in platelet activation, secretion of agonists from platelet granules, and in thrombin-induced platelet aggregation. Binding of its cognate ligands - homodimeric pdgfa, homodimeric pdgfb, heterodimers formed by pdgfa and pdgfb or homodimeric pdgfc -leads to the activation of several signaling cascades; the response depends on the nature of the bound ligand and is modulated by the formation of heterodimers between pdgfra and pdgfrb. Phosphorylates pik3r1, plcg1, and ptpn11. Activation of plcg1 leads to the production of the cellular signaling molecules diacylglycerol and inositol 1,4,5-trisphosphate, mobilization of cytosolic Ca(2+) and the activation of protein kinase C. Phosphorylates pik3r1, the regulatory subunit of phosphatidylinositol 3-kinase, and thereby mediates activation of the akt1 signaling pathway. Mediates activation of hras and of the MAP kinases mapk1/erk2 and/or mapk3/erk1. Promotes activation of stat family members stat1, stat3 and stat5a and/or stat5b. Receptor signaling is down-regulated by protein phosphatases that dephosphorylate the receptor and its down-stream effectors, and by rapid internalization of the activated receptor. The protein is Platelet-derived growth factor receptor alpha (pdgfra) of Xenopus laevis (African clawed frog).